A 259-amino-acid chain; its full sequence is 3-deoxy-manno-octulosonate cytidylyltransferase (259 aa).

This sequence belongs to the KdsB family.

It is found in the cytoplasm. The catalysed reaction is 3-deoxy-alpha-D-manno-oct-2-ulosonate + CTP = CMP-3-deoxy-beta-D-manno-octulosonate + diphosphate. It participates in nucleotide-sugar biosynthesis; CMP-3-deoxy-D-manno-octulosonate biosynthesis; CMP-3-deoxy-D-manno-octulosonate from 3-deoxy-D-manno-octulosonate and CTP: step 1/1. The protein operates within bacterial outer membrane biogenesis; lipopolysaccharide biosynthesis. In terms of biological role, activates KDO (a required 8-carbon sugar) for incorporation into bacterial lipopolysaccharide in Gram-negative bacteria. This is 3-deoxy-manno-octulosonate cytidylyltransferase from Protochlamydia amoebophila (strain UWE25).